The chain runs to 304 residues: Ribosomal RNA small subunit methyltransferase H (304 aa).

Residues 37 to 39 (GGH), aspartate 57, phenylalanine 79, aspartate 100, and histidine 107 contribute to the S-adenosyl-L-methionine site.

It belongs to the methyltransferase superfamily. RsmH family.

Its subcellular location is the cytoplasm. It catalyses the reaction cytidine(1402) in 16S rRNA + S-adenosyl-L-methionine = N(4)-methylcytidine(1402) in 16S rRNA + S-adenosyl-L-homocysteine + H(+). Functionally, specifically methylates the N4 position of cytidine in position 1402 (C1402) of 16S rRNA. This is Ribosomal RNA small subunit methyltransferase H from Phocaeicola vulgatus (strain ATCC 8482 / DSM 1447 / JCM 5826 / CCUG 4940 / NBRC 14291 / NCTC 11154) (Bacteroides vulgatus).